The following is a 343-amino-acid chain: Heat-inducible transcription repressor HrcA (343 aa).

Belongs to the HrcA family.

In terms of biological role, negative regulator of class I heat shock genes (grpE-dnaK-dnaJ and groELS operons). Prevents heat-shock induction of these operons. This chain is Heat-inducible transcription repressor HrcA, found in Leptospira biflexa serovar Patoc (strain Patoc 1 / Ames).